Reading from the N-terminus, the 261-residue chain is uncharacterized protein (261 aa).

Polar residues predominate over residues 20–34 (TMSTPFLESDNSNTQ). A disordered region spans residues 20–55 (TMSTPFLESDNSNTQSISGRIGSNNNSNSKNSGGIG). Low complexity predominate over residues 35 to 51 (SISGRIGSNNNSNSKNS). 3 consecutive transmembrane segments (helical) span residues 113–133 (LFSG…ILLL), 183–200 (LIFW…ILFF), and 204–226 (IISL…MANV).

Belongs to the TVP23 family.

The protein localises to the membrane. This is an uncharacterized protein from Dictyostelium discoideum (Social amoeba).